The sequence spans 20 residues: Flagellar filament 33 kDa core protein (20 aa).

This sequence belongs to the bacterial flagellin family. In terms of assembly, the flagellum consists of an outer layer composed of repeating units of FlaA around a core that contains one or all of five antigenically related polypeptides.

The protein localises to the periplasmic flagellum. It localises to the periplasm. Functionally, component of the core of the flagella. The sequence is that of Flagellar filament 33 kDa core protein from Spirochaeta aurantia.